The following is a 249-amino-acid chain: MHGWLLLVWVQGLIQAAFLATAIGATAGTIDTKRNISAEEGGSVILQCHFSSDTAEVTQVDWKQQDQLLAIYSVDLGWHVASVFSDRVVPGPSLGLTFQSLTMNDTGEYFCTYHTYPGGIYKGRIFLKVQESSDDRNGLAQFQTAPLGGTMAAVLGLICLMVTGVTVLARKDKSIRMHSIESGLGRTEAEPQEWNLRSLSSPGSPVQTQTAPAGPCGEQAEDDYADPQEYFNVLSYRSLESFIAVSKTG.

An N-terminal signal peptide occupies residues 1–28 (MHGWLLLVWVQGLIQAAFLATAIGATAG). The Ig-like V-type domain maps to 29 to 127 (TIDTKRNISA…GGIYKGRIFL (99 aa)). Topologically, residues 29 to 148 (TIDTKRNISA…LAQFQTAPLG (120 aa)) are extracellular. A homodimerization region spans residues 35 to 45 (NISAEEGGSVI). The cysteines at positions 48 and 111 are disulfide-linked. A glycan (N-linked (GlcNAc...) asparagine) is linked at Asn104. The helical transmembrane segment at 149-169 (GTMAAVLGLICLMVTGVTVLA) threads the bilayer. At 170–249 (RKDKSIRMHS…ESFIAVSKTG (80 aa)) the chain is on the cytoplasmic side. The disordered stretch occupies residues 182 to 222 (SGLGRTEAEPQEWNLRSLSSPGSPVQTQTAPAGPCGEQAED). Over residues 195–211 (NLRSLSSPGSPVQTQTA) the composition is skewed to polar residues. An ITIM motif motif is present at residues 234 to 239 (LSYRSL).

Homodimer in cis; binds with high affinity to PVR, forming a heterotetrameric assembly of two TIGIT and two PVR molecules. Binds with lower affinity to NECTIN2 and NECTIN3. Interacts with GRB2. Interacts with NECTIN4.

It is found in the cell membrane. In terms of biological role, inhibitory receptor that plays a role in the modulation of immune responses. Suppresses T-cell activation by promoting the generation of mature immunoregulatory dendritic cells. Upon binding to its ligands PVR/CD155 or NECTIN2/CD112, which are expressed on antigen-presenting cells, sends inhibitory signals to the T-cell or NK cell. Mechanistically, interaction with ligand leads to phosphorylation of the cytoplasmic tail by Src family tyrosine kinases such as FYN or LCK, allowing subsequent binding to adapter GRB2 and SHIP1/INPP5D. In turn, inhibits PI3K and MAPK signaling cascades. In addition, associates with beta-arrestin-2/ARRB2 to recruit SHIP1/INPP5D that suppresses autoubiquitination of TRAF6 and subsequently inhibits NF-kappa-B signaling pathway. Also acts as a receptor for NECTIN4 to inhibit NK cell cytotoxicity. The polypeptide is T-cell immunoreceptor with Ig and ITIM domains (Mus musculus (Mouse)).